The chain runs to 185 residues: Elongation factor P (185 aa).

This sequence belongs to the elongation factor P family.

The protein resides in the cytoplasm. Its pathway is protein biosynthesis; polypeptide chain elongation. Involved in peptide bond synthesis. Stimulates efficient translation and peptide-bond synthesis on native or reconstituted 70S ribosomes in vitro. Probably functions indirectly by altering the affinity of the ribosome for aminoacyl-tRNA, thus increasing their reactivity as acceptors for peptidyl transferase. The sequence is that of Elongation factor P from Thermoanaerobacter sp. (strain X514).